Consider the following 151-residue polypeptide: Apolipoprotein A-I (151 aa).

A signal peptide spans 1 to 18 (MKAVVLTLAVLFLTGSQA). Residues 19-24 (RHFWQQ) constitute a propeptide that is removed on maturation. Repeat copies occupy residues 67-88 (LKLLDNWDTLGSTITKLREQIG) and 89-110 (PVTQEFWDNLEKETEVLRQEMS). The segment at 67-143 (LKLLDNWDTL…EVELYRQKVA (77 aa)) is 4 X approximate tandem repeats. A Methionine sulfoxide modification is found at methionine 109. Residues 111 to 121 (KDLEEVKQKVQ) form a 3; half-length repeat. Residues 122–143 (PYLDDFQKKWQEEVELYRQKVA) form repeat 4.

It belongs to the apolipoprotein A1/A4/E family. Homodimer. Interacts with APOA1BP and CLU. Component of a sperm activating protein complex (SPAP), consisting of APOA1, an immunoglobulin heavy chain, an immunoglobulin light chain and albumin. Interacts with NDRG1. Interacts with SCGB3A2. Interacts with NAXE and YJEFN3. Glycosylated. In terms of processing, palmitoylated. Post-translationally, phosphorylation sites are present in the extracellular medium. As to expression, major protein of plasma HDL, also found in chylomicrons.

It localises to the secreted. Participates in the reverse transport of cholesterol from tissues to the liver for excretion by promoting cholesterol efflux from tissues and by acting as a cofactor for the lecithin cholesterol acyltransferase (LCAT). As part of the SPAP complex, activates spermatozoa motility. In Panthera tigris altaica (Siberian tiger), this protein is Apolipoprotein A-I (APOA1).